The primary structure comprises 298 residues: MMAIATKRRGVAAVMSLGVATMTAVPALAQDVLGDLPVIGKPVNGGMNFQPASSPLAHDQQWLDHFVLYIITAVTIFVCLLLLICIVRFNRRANPVPARFTHNTPIEVIWTLVPVLILVAIGAFSLPILFRSQEMPNDPDLVIKAIGHQWYWSYEYPNDGVAFDALMLEKEALADAGYSEDEYLLATDNPVVVPVGKKVLVQVTATDVIHAWTIPAFAVKQDAVPGRIAQLWFSVDQEGVYFGQCSELCGINHAYMPIVVKAVSQEKYEAWLAGAKEEFAADASDYLPASPVKLASAE.

Positions 1 to 29 are cleaved as a signal peptide; the sequence is MMAIATKRRGVAAVMSLGVATMTAVPALA. Pyrrolidone carboxylic acid is present on Gln-30. At 30–55 the chain is on the periplasmic side; it reads QDVLGDLPVIGKPVNGGMNFQPASSP. A helical transmembrane segment spans residues 56-88; it reads LAHDQQWLDHFVLYIITAVTIFVCLLLLICIVR. Topologically, residues 89–103 are cytoplasmic; sequence FNRRANPVPARFTHN. A helical transmembrane segment spans residues 104 to 134; it reads TPIEVIWTLVPVLILVAIGAFSLPILFRSQE. Over 135 to 280 the chain is Periplasmic; that stretch reads MPNDPDLVIK…WLAGAKEEFA (146 aa). Positions 210, 245, 247, 249, 253, and 256 each coordinate Cu cation. A propeptide spans 281–298 (C-terminal propeptide); that stretch reads ADASDYLPASPVKLASAE.

Belongs to the cytochrome c oxidase subunit 2 family. Binuclear copper center (CuA) serves as cofactor.

It is found in the cell inner membrane. The enzyme catalyses 4 Fe(II)-[cytochrome c] + O2 + 8 H(+)(in) = 4 Fe(III)-[cytochrome c] + 2 H2O + 4 H(+)(out). Functionally, subunits I and II form the functional core of the enzyme complex. Electrons originating in cytochrome c are transferred via heme a and Cu(A) to the binuclear center formed by heme a3 and Cu(B). The chain is Cytochrome c oxidase subunit 2 (ctaC) from Paracoccus denitrificans.